The sequence spans 500 residues: MSSPLSQAFAQNFLGHSPRWYKLTILAFLLSNPLLLWLAGPTVAAWVLVGEFIFTLAMALKCYPLQPGGLLVLEALLLGLASPEALYAELQHNFPVLLLLMFMVAGIYFMKDLLLLLFSRLLLGVRSKTLLSLLFCLLAALLSAFLDALTVTAVVISVAVAFFAVYHRVASGQRASEDYDPATDRQVPELHRAHLEEFRAFLRSLLMHAAVGTALGGVCTLVGEPQNLLIGHEAGWHFVEFFRQVAPVSMPVLAAGLLTCVALEKSRRFGYGAQLPAAVRQVLAEYAAGESRKRGPQQKAALLVQALAALVLMIGLALHVAEVGLIGLLVIVLITAFTGITDEHQIGRAFQEALPFTALLVAFFAVVAVIHQQHLFTPIIQAVLALPAERQPGMLFIANGLLSAISDNVFVATIYITEVKQALDAGHMTREHFDTLAVAINTGTNLPSVATPNGQAAFLFLLTSSIAPLVRLSYGRMVWMALPYTLVMGGLGWWAVSHWL.

The next 12 helical transmembrane spans lie at 28–50, 68–88, 98–118, 121–141, 145–165, 205–225, 244–264, 301–318, 350–370, 394–414, 449–469, and 477–497; these read FLLS…VLVG, GGLL…ALYA, LLLM…LLLF, LLLG…LAAL, FLDA…FFAV, LLMH…VGEP, QVAP…VALE, ALLV…GLAL, FQEA…VAVI, MLFI…VATI, VATP…IAPL, and MVWM…WAVS.

The protein belongs to the NhaB Na(+)/H(+) (TC 2.A.34) antiporter family.

It is found in the cell inner membrane. It catalyses the reaction 2 Na(+)(in) + 3 H(+)(out) = 2 Na(+)(out) + 3 H(+)(in). Its function is as follows. Na(+)/H(+) antiporter that extrudes sodium in exchange for external protons. The sequence is that of Na(+)/H(+) antiporter NhaB from Pseudomonas paraeruginosa (strain DSM 24068 / PA7) (Pseudomonas aeruginosa (strain PA7)).